A 154-amino-acid polypeptide reads, in one-letter code: Hydroperoxy fatty acid reductase Gpx2 (154 aa).

Residue Cys34 is part of the active site.

Belongs to the glutathione peroxidase family. In terms of assembly, monomer.

The catalysed reaction is a hydroperoxy polyunsaturated fatty acid + NADPH + H(+) = a hydroxy polyunsaturated fatty acid + NADP(+) + H2O. Mercaptosuccinate, pCMB, and nethylmaleimide act as inhibitors of the catalytic activity. Functionally, hydroperoxy fatty acid reductase essential for the removal of lipid hydroperoxides under normal and stress conditions, leading to the protection of membrane integrity. The sequence is that of Hydroperoxy fatty acid reductase Gpx2 (gpx2) from Synechocystis sp. (strain ATCC 27184 / PCC 6803 / Kazusa).